Consider the following 22-residue polypeptide: Cysteine-rich venom protein collettin-a (22 aa).

The segment covering serine 1 to asparagine 15 has biased composition (basic and acidic residues). The tract at residues serine 1–lysine 22 is disordered.

Belongs to the CRISP family. In terms of processing, contains 8 disulfide bonds. In terms of tissue distribution, expressed by the venom gland.

Its subcellular location is the secreted. In Pseudechis colletti (Collett's snake), this protein is Cysteine-rich venom protein collettin-a.